An 804-amino-acid chain; its full sequence is E3 UFM1-protein ligase 1 homolog (804 aa).

Position 1 is an N-acetylmethionine (Met1). Residues 397–483 (IHPSSKSSES…VKAQESNNII (87 aa)) are disordered. Over residues 400–409 (SSKSSESTES) the composition is skewed to low complexity. Residues 463 to 475 (LDSKAGGKKESVK) are compositionally biased toward basic and acidic residues.

This sequence belongs to the UFL1 family.

Its function is as follows. E3 UFM1-protein ligase that mediates ufmylation of target proteins. This Arabidopsis thaliana (Mouse-ear cress) protein is E3 UFM1-protein ligase 1 homolog.